The following is a 297-amino-acid chain: UTP--glucose-1-phosphate uridylyltransferase (297 aa).

Belongs to the UDPGP type 2 family.

The catalysed reaction is alpha-D-glucose 1-phosphate + UTP + H(+) = UDP-alpha-D-glucose + diphosphate. It functions in the pathway carbohydrate metabolism; nucleotide-sugar metabolism. Its pathway is bacterial outer membrane biogenesis; lipopolysaccharide biosynthesis. In terms of biological role, may play a role in stationary phase survival. This Salmonella typhimurium (strain LT2 / SGSC1412 / ATCC 700720) protein is UTP--glucose-1-phosphate uridylyltransferase (galF).